The chain runs to 424 residues: Trigger factor (424 aa).

One can recognise a PPIase FKBP-type domain in the interval G163–P248.

Belongs to the FKBP-type PPIase family. Tig subfamily.

The protein resides in the cytoplasm. The enzyme catalyses [protein]-peptidylproline (omega=180) = [protein]-peptidylproline (omega=0). Its function is as follows. Involved in protein export. Acts as a chaperone by maintaining the newly synthesized protein in an open conformation. Functions as a peptidyl-prolyl cis-trans isomerase. This Bacillus pumilus (strain SAFR-032) protein is Trigger factor.